We begin with the raw amino-acid sequence, 356 residues long: Glycerol-1-phosphate dehydrogenase [NAD(P)+] (356 aa).

NAD(+)-binding positions include 103–107 (GRSID) and 125–128 (TAAS). Residue D130 participates in substrate binding. S134 serves as a coordination point for NAD(+). Residue D177 participates in substrate binding. The Zn(2+) site is built by D177 and H257. Residue H261 participates in substrate binding. H273 is a Zn(2+) binding site.

This sequence belongs to the glycerol-1-phosphate dehydrogenase family. The cofactor is Zn(2+).

It is found in the cytoplasm. It carries out the reaction sn-glycerol 1-phosphate + NAD(+) = dihydroxyacetone phosphate + NADH + H(+). The enzyme catalyses sn-glycerol 1-phosphate + NADP(+) = dihydroxyacetone phosphate + NADPH + H(+). It functions in the pathway membrane lipid metabolism; glycerophospholipid metabolism. Functionally, catalyzes the NAD(P)H-dependent reduction of dihydroxyacetonephosphate (DHAP or glycerone phosphate) to glycerol 1-phosphate (G1P). The G1P thus generated is used as the glycerophosphate backbone of phospholipids in the cellular membranes of Archaea. This chain is Glycerol-1-phosphate dehydrogenase [NAD(P)+], found in Methanosarcina barkeri (strain Fusaro / DSM 804).